A 44-amino-acid polypeptide reads, in one-letter code: Defensin-like peptide (44 aa).

Disulfide bonds link cysteine 7-cysteine 32, cysteine 18-cysteine 40, and cysteine 22-cysteine 42.

As to expression, hemolymph.

Its subcellular location is the secreted. In terms of biological role, has antibacterial activity against the Gram-positive bacterium S.lutea (MIC=1.9 uM). Lacks antibacterial activity against the Gram-positive bacteria L.monocytogenes and M.luteus, and the Gram-negative bacteria E.coli D31, E.coli ATCC 25922, and S.typhimurium. Has antifungal activity against A.niger (MIC=2.9 uM), C.albicans (MIC=2.9 uM), C.fructus (MIC=2.9 uM), C.wickerhamii (MIC=2.9 uM), P.pastoris (MIC=2.9 uM), P.stiptis (MIC=2.9 uM), P.tannophilus (MIC=2.9 uM), T.harzianum (MIC=2.9 uM), and Z.marxianus (MIC=2.9 uM), but lacks antifungal activity against C.albidus, F.oxysporum, and S.cerevisiae. The protein is Defensin-like peptide of Galleria mellonella (Greater wax moth).